The sequence spans 246 residues: Large ribosomal subunit protein uL2 (246 aa).

The tract at residues 197-227 (SPYAHPHGGGSHQKGGTPVPKTAPPGQKVGF) is disordered.

The protein belongs to the universal ribosomal protein uL2 family. In terms of assembly, part of the 50S ribosomal subunit. Forms a bridge to the 30S subunit in the 70S ribosome.

In terms of biological role, one of the primary rRNA binding proteins. Required for association of the 30S and 50S subunits to form the 70S ribosome, for tRNA binding and peptide bond formation. It has been suggested to have peptidyltransferase activity; this is somewhat controversial. Makes several contacts with the 16S rRNA in the 70S ribosome. This chain is Large ribosomal subunit protein uL2, found in Pyrobaculum aerophilum (strain ATCC 51768 / DSM 7523 / JCM 9630 / CIP 104966 / NBRC 100827 / IM2).